A 180-amino-acid chain; its full sequence is Prorelaxin (180 aa).

The first 25 residues, 1 to 25 (MLRLFLSHLLGVWLLLSLRARKIPA), serve as a signal peptide directing secretion. Disulfide bonds link cysteine 33–cysteine 167, cysteine 45–cysteine 180, and cysteine 166–cysteine 171. Positions 53–154 (SSQQHREPRQ…RSRLDAHSRI (102 aa)) are cleaved as a propeptide — connecting peptide.

This sequence belongs to the insulin family. As to quaternary structure, heterodimer of a B chain and an A chain linked by two disulfide bonds. Expressed by the placenta. Exclusively detected in cells located in the lamellar placental labyrinth and absent from other placental and non-placental uterine parts.

It localises to the secreted. In terms of biological role, relaxin is an ovarian hormone that acts with estrogen to produce dilatation of the birth canal in many mammals. The protein is Prorelaxin (RLN) of Felis catus (Cat).